We begin with the raw amino-acid sequence, 296 residues long: Xyloglucan endotransglucosylase/hydrolase 1 (296 aa).

Residues 1–23 (MGSSSSMWTVCVILASLASAALC) form the signal peptide. The region spanning 24–222 (ANPRRPVDVQ…WSKAPFIAAY (199 aa)) is the GH16 domain. Residue Glu108 is the Nucleophile of the active site. The Proton donor role is filled by Glu112. Residue Glu112 coordinates xyloglucan. N-linked (GlcNAc...) asparagine glycosylation is present at Asn116. Residues 125–127 (QTN), 135–137 (DRE), 201–202 (DW), and Gly206 contribute to the xyloglucan site. 2 disulfide bridges follow: Cys230-Cys239 and Cys276-Cys290. Arg281 serves as a coordination point for xyloglucan.

Belongs to the glycosyl hydrolase 16 family. XTH group 1 subfamily. Contains at least one intrachain disulfide bond essential for its enzymatic activity. Post-translationally, N-glycosylated; not essential for its enzymatic activity.

Its subcellular location is the secreted. It localises to the cell wall. It is found in the extracellular space. The protein localises to the apoplast. It carries out the reaction breaks a beta-(1-&gt;4) bond in the backbone of a xyloglucan and transfers the xyloglucanyl segment on to O-4 of the non-reducing terminal glucose residue of an acceptor, which can be a xyloglucan or an oligosaccharide of xyloglucan.. Functionally, catalyzes xyloglucan endohydrolysis (XEH) and/or endotransglycosylation (XET). Cleaves and religates xyloglucan polymers, an essential constituent of the primary cell wall, and thereby participates in cell wall construction of growing tissues. In Glycine max (Soybean), this protein is Xyloglucan endotransglucosylase/hydrolase 1.